The chain runs to 253 residues: Imidazole glycerol phosphate synthase subunit HisF (253 aa).

Catalysis depends on residues Asp-11 and Asp-130.

This sequence belongs to the HisA/HisF family. Heterodimer of HisH and HisF.

It localises to the cytoplasm. The enzyme catalyses 5-[(5-phospho-1-deoxy-D-ribulos-1-ylimino)methylamino]-1-(5-phospho-beta-D-ribosyl)imidazole-4-carboxamide + L-glutamine = D-erythro-1-(imidazol-4-yl)glycerol 3-phosphate + 5-amino-1-(5-phospho-beta-D-ribosyl)imidazole-4-carboxamide + L-glutamate + H(+). The protein operates within amino-acid biosynthesis; L-histidine biosynthesis; L-histidine from 5-phospho-alpha-D-ribose 1-diphosphate: step 5/9. In terms of biological role, IGPS catalyzes the conversion of PRFAR and glutamine to IGP, AICAR and glutamate. The HisF subunit catalyzes the cyclization activity that produces IGP and AICAR from PRFAR using the ammonia provided by the HisH subunit. The polypeptide is Imidazole glycerol phosphate synthase subunit HisF (Ruegeria pomeroyi (strain ATCC 700808 / DSM 15171 / DSS-3) (Silicibacter pomeroyi)).